We begin with the raw amino-acid sequence, 474 residues long: uncharacterized protein (474 aa).

Over residues 1-11 the composition is skewed to acidic residues; that stretch reads MGGSDFEDDEL. The disordered stretch occupies residues 1-163; it reads MGGSDFEDDE…ETSPFNREDG (163 aa). Positions 12-25 are enriched in basic and acidic residues; that stretch reads FKDLYGEENEKKVE. Polar residues predominate over residues 27 to 39; the sequence is ASGNQETSNVTPT. Residues 40-76 are compositionally biased toward basic and acidic residues; it reads KENEGYEELEKSGEAGAERTKENPFREEPGADFDRSG. Positions 129–140 are enriched in polar residues; the sequence is NDNYNENQSALT. 2 RRM domains span residues 163-245 and 247-324; these read GKMF…EQEK and AKMF…RATP. Residues 412–474 are disordered; that stretch reads DPSKMNQGTG…GGHSFHPYRR (63 aa). Residues 425-434 are compositionally biased toward low complexity; sequence PFSPSMPSGS. Positions 435 to 444 are enriched in gly residues; sequence SRGGYHGRNP.

It is found in the nucleus. This is an uncharacterized protein from Schizosaccharomyces pombe (strain 972 / ATCC 24843) (Fission yeast).